Reading from the N-terminus, the 408-residue chain is Cytochrome P450 55A3 (408 aa).

Residue C357 participates in heme binding.

It belongs to the cytochrome P450 family. Requires heme as cofactor.

The chain is Cytochrome P450 55A3 (CYP55A3) from Fusarium lichenicola (Cylindrocarpon lichenicola).